The following is a 291-amino-acid chain: Bifunctional protein FolD 1 (291 aa).

NADP(+) contacts are provided by residues 167-169, Ile-192, and Ile-233; that span reads GAS.

Belongs to the tetrahydrofolate dehydrogenase/cyclohydrolase family. Homodimer.

The enzyme catalyses (6R)-5,10-methylene-5,6,7,8-tetrahydrofolate + NADP(+) = (6R)-5,10-methenyltetrahydrofolate + NADPH. It catalyses the reaction (6R)-5,10-methenyltetrahydrofolate + H2O = (6R)-10-formyltetrahydrofolate + H(+). It participates in one-carbon metabolism; tetrahydrofolate interconversion. Functionally, catalyzes the oxidation of 5,10-methylenetetrahydrofolate to 5,10-methenyltetrahydrofolate and then the hydrolysis of 5,10-methenyltetrahydrofolate to 10-formyltetrahydrofolate. The polypeptide is Bifunctional protein FolD 1 (Pseudomonas putida (strain ATCC 47054 / DSM 6125 / CFBP 8728 / NCIMB 11950 / KT2440)).